The following is a 192-amino-acid chain: Probable GTP-binding protein EngB (192 aa).

The 171-residue stretch at asparagine 22–alanine 192 folds into the EngB-type G domain. Residues glycine 30–serine 37, glycine 57–glycine 61, aspartate 75–glycine 78, threonine 142–aspartate 145, and phenylalanine 173–alanine 175 contribute to the GTP site. The Mg(2+) site is built by serine 37 and threonine 59.

This sequence belongs to the TRAFAC class TrmE-Era-EngA-EngB-Septin-like GTPase superfamily. EngB GTPase family. Mg(2+) serves as cofactor.

Necessary for normal cell division and for the maintenance of normal septation. This is Probable GTP-binding protein EngB from Thermoanaerobacter pseudethanolicus (strain ATCC 33223 / 39E) (Clostridium thermohydrosulfuricum).